The sequence spans 490 residues: Probable cytosol aminopeptidase (490 aa).

Residues lysine 260 and aspartate 265 each contribute to the Mn(2+) site. Residue lysine 272 is part of the active site. Residues aspartate 284, aspartate 343, and glutamate 345 each contribute to the Mn(2+) site. Residue arginine 347 is part of the active site.

The protein belongs to the peptidase M17 family. It depends on Mn(2+) as a cofactor.

Its subcellular location is the cytoplasm. The enzyme catalyses Release of an N-terminal amino acid, Xaa-|-Yaa-, in which Xaa is preferably Leu, but may be other amino acids including Pro although not Arg or Lys, and Yaa may be Pro. Amino acid amides and methyl esters are also readily hydrolyzed, but rates on arylamides are exceedingly low.. The catalysed reaction is Release of an N-terminal amino acid, preferentially leucine, but not glutamic or aspartic acids.. Its function is as follows. Presumably involved in the processing and regular turnover of intracellular proteins. Catalyzes the removal of unsubstituted N-terminal amino acids from various peptides. The polypeptide is Probable cytosol aminopeptidase (Gloeothece citriformis (strain PCC 7424) (Cyanothece sp. (strain PCC 7424))).